Here is a 206-residue protein sequence, read N- to C-terminus: Nucleoside triphosphate pyrophosphatase (206 aa).

The active-site Proton acceptor is aspartate 76.

This sequence belongs to the Maf family. A divalent metal cation serves as cofactor.

Its subcellular location is the cytoplasm. It carries out the reaction a ribonucleoside 5'-triphosphate + H2O = a ribonucleoside 5'-phosphate + diphosphate + H(+). It catalyses the reaction a 2'-deoxyribonucleoside 5'-triphosphate + H2O = a 2'-deoxyribonucleoside 5'-phosphate + diphosphate + H(+). In terms of biological role, nucleoside triphosphate pyrophosphatase. May have a dual role in cell division arrest and in preventing the incorporation of modified nucleotides into cellular nucleic acids. This Streptomyces avermitilis (strain ATCC 31267 / DSM 46492 / JCM 5070 / NBRC 14893 / NCIMB 12804 / NRRL 8165 / MA-4680) protein is Nucleoside triphosphate pyrophosphatase.